The following is a 118-amino-acid chain: Class I hydrophobin 1 (118 aa).

Residues 1-20 form the signal peptide; it reads MFARLSTALLAFTLATAVVA. Intrachain disulfides connect Cys-34–Cys-97, Cys-41–Cys-91, Cys-42–Cys-77, and Cys-98–Cys-111. Asn-54 carries an N-linked (GlcNAc...) asparagine glycan. Residue Asn-115 is glycosylated (N-linked (GlcNAc...) asparagine).

It belongs to the fungal hydrophobin family. As to quaternary structure, self-assembles to form functional amyloid fibrils called rodlets. Self-assembly into fibrillar rodlets occurs spontaneously at hydrophobic:hydrophilic interfaces and the rodlets further associate laterally to form amphipathic monolayers.

It is found in the secreted. Its subcellular location is the cell wall. In terms of biological role, aerial growth, conidiation, and dispersal of filamentous fungi in the environment rely upon a capability of their secreting small amphipathic proteins called hydrophobins (HPBs) with low sequence identity. Class I can self-assemble into an outermost layer of rodlet bundles on aerial cell surfaces, conferring cellular hydrophobicity that supports fungal growth, development and dispersal; whereas Class II form highly ordered films at water-air interfaces through intermolecular interactions but contribute nothing to the rodlet structure. The protein is Class I hydrophobin 1 of Coprinopsis cinerea (strain Okayama-7 / 130 / ATCC MYA-4618 / FGSC 9003) (Inky cap fungus).